A 179-amino-acid polypeptide reads, in one-letter code: ATP synthase subunit b (179 aa).

Residues F26–P46 form a helical membrane-spanning segment.

It belongs to the ATPase B chain family. F-type ATPases have 2 components, F(1) - the catalytic core - and F(0) - the membrane proton channel. F(1) has five subunits: alpha(3), beta(3), gamma(1), delta(1), epsilon(1). F(0) has four main subunits: a(1), b(1), b'(1) and c(10-14). The alpha and beta chains form an alternating ring which encloses part of the gamma chain. F(1) is attached to F(0) by a central stalk formed by the gamma and epsilon chains, while a peripheral stalk is formed by the delta, b and b' chains.

The protein resides in the cellular thylakoid membrane. F(1)F(0) ATP synthase produces ATP from ADP in the presence of a proton or sodium gradient. F-type ATPases consist of two structural domains, F(1) containing the extramembraneous catalytic core and F(0) containing the membrane proton channel, linked together by a central stalk and a peripheral stalk. During catalysis, ATP synthesis in the catalytic domain of F(1) is coupled via a rotary mechanism of the central stalk subunits to proton translocation. In terms of biological role, component of the F(0) channel, it forms part of the peripheral stalk, linking F(1) to F(0). The sequence is that of ATP synthase subunit b from Synechocystis sp. (strain ATCC 27184 / PCC 6803 / Kazusa).